The sequence spans 427 residues: 3-isopropylmalate dehydratase large subunit (427 aa).

C308, C368, and C371 together coordinate [4Fe-4S] cluster.

It belongs to the aconitase/IPM isomerase family. LeuC type 2 subfamily. In terms of assembly, heterodimer of LeuC and LeuD. [4Fe-4S] cluster is required as a cofactor.

It catalyses the reaction (2R,3S)-3-isopropylmalate = (2S)-2-isopropylmalate. It functions in the pathway amino-acid biosynthesis; L-leucine biosynthesis; L-leucine from 3-methyl-2-oxobutanoate: step 2/4. Catalyzes the isomerization between 2-isopropylmalate and 3-isopropylmalate, via the formation of 2-isopropylmaleate. The chain is 3-isopropylmalate dehydratase large subunit from Geotalea uraniireducens (strain Rf4) (Geobacter uraniireducens).